A 247-amino-acid chain; its full sequence is Ribonuclease PH (247 aa).

Phosphate contacts are provided by residues R87 and G125–R127.

This sequence belongs to the RNase PH family. As to quaternary structure, homohexameric ring arranged as a trimer of dimers.

It carries out the reaction tRNA(n+1) + phosphate = tRNA(n) + a ribonucleoside 5'-diphosphate. Its function is as follows. Phosphorolytic 3'-5' exoribonuclease that plays an important role in tRNA 3'-end maturation. Removes nucleotide residues following the 3'-CCA terminus of tRNAs; can also add nucleotides to the ends of RNA molecules by using nucleoside diphosphates as substrates, but this may not be physiologically important. Probably plays a role in initiation of 16S rRNA degradation (leading to ribosome degradation) during starvation. The sequence is that of Ribonuclease PH from Frankia casuarinae (strain DSM 45818 / CECT 9043 / HFP020203 / CcI3).